The following is a 1173-amino-acid chain: Ubiquitin conjugation factor E4 B (1173 aa).

N-acetylmethionine is present on Met1. Positions 1-155 (MEELSADEIR…EPSSGPEVSE (155 aa)) are disordered. Residues 16–33 (RLAGGQTSQPTTPLTSPQ) are compositionally biased toward low complexity. Phosphoserine occurs at positions 23 and 31. The span at 51–64 (QSLGLNVHNMTPAT) shows a compositional bias: polar residues. Low complexity predominate over residues 76–99 (SQSSEGVSSLSSSPSNSLETQSQS). Phosphoserine occurs at positions 84, 88, 90, 101, 103, 105, and 124. The segment covering 134-147 (NDRREKRSLSDKEP) has biased composition (basic and acidic residues). Phosphoserine is present on residues Ser238, Ser674, and Ser840. Residues 928-948 (NKEQWDQLPRDQQQARQSQLA) are disordered. A compositionally biased stretch (low complexity) spans 937 to 948 (RDQQQARQSQLA). One can recognise a U-box domain in the interval 1098–1171 (DAPDEFRDPL…QAWMREKQSS (74 aa)). Ser1136 carries the post-translational modification Phosphoserine.

It belongs to the ubiquitin conjugation factor E4 family. In terms of assembly, interacts with VCP. Interacts with STUB1/CHIP and UNC45B. Proteolytically cleaved by caspases during apoptosis. Cleaved efficiently at Asp-123 by caspase-6 and granzyme B. Cleaved with approximately 10-fold less efficiency at Asp-109 by caspase-3 and caspase-7. Expressed predominantly in neuronal tissues. Also detected in liver, heart, brain, kidney and testis.

The protein resides in the cytoplasm. The protein localises to the nucleus. It catalyses the reaction S-ubiquitinyl-[E2 ubiquitin-conjugating enzyme]-L-cysteine + [acceptor protein]-L-lysine = [E2 ubiquitin-conjugating enzyme]-L-cysteine + N(6)-ubiquitinyl-[acceptor protein]-L-lysine.. Its pathway is protein modification; protein ubiquitination. Its function is as follows. Ubiquitin-protein ligase that probably functions as an E3 ligase in conjunction with specific E1 and E2 ligases. May also function as an E4 ligase mediating the assembly of polyubiquitin chains on substrates ubiquitinated by another E3 ubiquitin ligase. May regulate myosin assembly in striated muscles together with STUB1 and VCP/p97 by targeting myosin chaperone UNC45B for proteasomal degradation. The polypeptide is Ubiquitin conjugation factor E4 B (Mus musculus (Mouse)).